The following is a 79-amino-acid chain: MSDVAERVKKIVVDHLGVEESKVTENASFIDDLGADSLDTVELVMAFEEEFGCEIPDDAAEKILTVKDAIDFIKANAAA.

In terms of domain architecture, Carrier spans 2 to 77 (SDVAERVKKI…DAIDFIKANA (76 aa)). An O-(pantetheine 4'-phosphoryl)serine modification is found at S37.

It belongs to the acyl carrier protein (ACP) family. Post-translationally, 4'-phosphopantetheine is transferred from CoA to a specific serine of apo-ACP by AcpS. This modification is essential for activity because fatty acids are bound in thioester linkage to the sulfhydryl of the prosthetic group.

Its subcellular location is the cytoplasm. It participates in lipid metabolism; fatty acid biosynthesis. Functionally, carrier of the growing fatty acid chain in fatty acid biosynthesis. The protein is Acyl carrier protein of Azospirillum brasilense.